The sequence spans 192 residues: MSNTIKMVVGLGNPGKEYEQTRHNAGFWFLDELAWKWKASFKEEKKFFGEVARAALPDGDVWLLKPATFMNRSGQAVAALAQFYKIKPEEILVVHDELDIPCGRIKFKLGGGNGGHNGLKDIQAKLGTADYYRLRLGIGHPGDRNLVVGYVLNKPSAEHRRQIDDAVAKSLQAVPDIISGKWEEATRFLHSK.

Tyr18 serves as a coordination point for tRNA. Catalysis depends on His23, which acts as the Proton acceptor. TRNA is bound by residues Phe69, Asn71, and Asn117.

Belongs to the PTH family. In terms of assembly, monomer.

The protein resides in the cytoplasm. The enzyme catalyses an N-acyl-L-alpha-aminoacyl-tRNA + H2O = an N-acyl-L-amino acid + a tRNA + H(+). Its function is as follows. Hydrolyzes ribosome-free peptidyl-tRNAs (with 1 or more amino acids incorporated), which drop off the ribosome during protein synthesis, or as a result of ribosome stalling. Functionally, catalyzes the release of premature peptidyl moieties from peptidyl-tRNA molecules trapped in stalled 50S ribosomal subunits, and thus maintains levels of free tRNAs and 50S ribosomes. This is Peptidyl-tRNA hydrolase from Neisseria gonorrhoeae (strain ATCC 700825 / FA 1090).